A 206-amino-acid chain; its full sequence is dCTP deaminase, dUMP-forming (206 aa).

Residues 117 to 122, aspartate 135, 143 to 145, glutamine 163, tyrosine 177, lysine 184, and glutamine 188 each bind dCTP; these read RSSFGR and TLE. Glutamate 145 (proton donor/acceptor) is an active-site residue.

It belongs to the dCTP deaminase family. In terms of assembly, homotrimer.

The catalysed reaction is dCTP + 2 H2O = dUMP + NH4(+) + diphosphate. It participates in pyrimidine metabolism; dUMP biosynthesis; dUMP from dCTP: step 1/1. Functionally, bifunctional enzyme that catalyzes both the deamination of dCTP to dUTP and the hydrolysis of dUTP to dUMP without releasing the toxic dUTP intermediate. The protein is dCTP deaminase, dUMP-forming of Methanococcus maripaludis (strain C7 / ATCC BAA-1331).